Here is a 328-residue protein sequence, read N- to C-terminus: Homeobox protein Hox-D1 (328 aa).

The Antp-type hexapeptide signature appears at 204-209 (TFEWMK). Residues 229-288 (SSAIRTNFSTKQLTELEKEFHFNKYLTRARRIEIANCLHLNDTQVKIWFQNRRMKQKKRE) constitute a DNA-binding region (homeobox). The tract at residues 305–328 (PLSGTTPTKFIKNPGSPSQSQEPS) is disordered. The span at 319-328 (GSPSQSQEPS) shows a compositional bias: polar residues.

It belongs to the Antp homeobox family. Labial subfamily.

It localises to the nucleus. Sequence-specific transcription factor which is part of a developmental regulatory system that provides cells with specific positional identities on the anterior-posterior axis. Acts on the anterior body structures. The polypeptide is Homeobox protein Hox-D1 (HOXD1) (Homo sapiens (Human)).